The primary structure comprises 238 residues: Ribosomal RNA small subunit methyltransferase G (238 aa).

S-adenosyl-L-methionine-binding positions include Gly77, Phe82, 128 to 129, and Arg147; that span reads AE.

The protein belongs to the methyltransferase superfamily. RNA methyltransferase RsmG family.

The protein localises to the cytoplasm. In terms of biological role, specifically methylates the N7 position of guanine in position 535 of 16S rRNA. The protein is Ribosomal RNA small subunit methyltransferase G of Lysinibacillus sphaericus (strain C3-41).